A 360-amino-acid polypeptide reads, in one-letter code: tRNA N6-adenosine threonylcarbamoyltransferase (360 aa).

The Fe cation site is built by histidine 111 and histidine 115. Residues leucine 134–glycine 138, aspartate 167, glycine 180, aspartate 184, and asparagine 279 each bind substrate. Aspartate 307 provides a ligand contact to Fe cation.

This sequence belongs to the KAE1 / TsaD family. Requires Fe(2+) as cofactor.

Its subcellular location is the cytoplasm. It catalyses the reaction L-threonylcarbamoyladenylate + adenosine(37) in tRNA = N(6)-L-threonylcarbamoyladenosine(37) in tRNA + AMP + H(+). Functionally, required for the formation of a threonylcarbamoyl group on adenosine at position 37 (t(6)A37) in tRNAs that read codons beginning with adenine. Is involved in the transfer of the threonylcarbamoyl moiety of threonylcarbamoyl-AMP (TC-AMP) to the N6 group of A37, together with TsaE and TsaB. TsaD likely plays a direct catalytic role in this reaction. The polypeptide is tRNA N6-adenosine threonylcarbamoyltransferase (Acaryochloris marina (strain MBIC 11017)).